A 393-amino-acid polypeptide reads, in one-letter code: NAD(P)H-quinone oxidoreductase subunit H, chloroplastic (393 aa).

The protein belongs to the complex I 49 kDa subunit family. NDH is composed of at least 16 different subunits, 5 of which are encoded in the nucleus.

Its subcellular location is the plastid. The protein resides in the chloroplast thylakoid membrane. The enzyme catalyses a plastoquinone + NADH + (n+1) H(+)(in) = a plastoquinol + NAD(+) + n H(+)(out). It catalyses the reaction a plastoquinone + NADPH + (n+1) H(+)(in) = a plastoquinol + NADP(+) + n H(+)(out). Functionally, NDH shuttles electrons from NAD(P)H:plastoquinone, via FMN and iron-sulfur (Fe-S) centers, to quinones in the photosynthetic chain and possibly in a chloroplast respiratory chain. The immediate electron acceptor for the enzyme in this species is believed to be plastoquinone. Couples the redox reaction to proton translocation, and thus conserves the redox energy in a proton gradient. The sequence is that of NAD(P)H-quinone oxidoreductase subunit H, chloroplastic from Lepidium virginicum (Virginia pepperweed).